The primary structure comprises 122 residues: Basic phospholipase A2 PLA-B (122 aa).

Cystine bridges form between Cys-26/Cys-115, Cys-28/Cys-44, Cys-43/Cys-95, Cys-49/Cys-122, Cys-50/Cys-88, Cys-57/Cys-81, and Cys-75/Cys-86. Ca(2+) contacts are provided by Tyr-27, Gly-29, and Gly-31. Residue His-47 is part of the active site. Residue Asp-48 coordinates Ca(2+). Residue Asp-89 is part of the active site.

The protein belongs to the phospholipase A2 family. Group II subfamily. D49 sub-subfamily. Ca(2+) serves as cofactor. Expressed by the venom gland.

It is found in the secreted. The enzyme catalyses a 1,2-diacyl-sn-glycero-3-phosphocholine + H2O = a 1-acyl-sn-glycero-3-phosphocholine + a fatty acid + H(+). Its function is as follows. Snake venom phospholipase A2 (PLA2) that displays edema-inducing activities. PLA-B is three times more active than PLA-A in edema-inducing activities. PLA2 catalyzes the calcium-dependent hydrolysis of the 2-acyl groups in 3-sn-phosphoglycerides. The polypeptide is Basic phospholipase A2 PLA-B (Protobothrops flavoviridis (Habu)).